The chain runs to 241 residues: MEAAADGPAETQSPVEKDSPAKTQSPAQDTSIMSRNNADTGRVLALPEHKKKRKGNLPAESVKILRDWMYKHRFKAYPSEEEKQMLSEKTNLSLLQISNWFINARRRILPDMLQQRRNDPIIGHKTGKDAHATHLQSTEASVPAKSGPSGPDNVQSLPLWPLPKGQMSREKQPDPESAPSQKLTGIAQPKKKVKVSVTSPSSPELVSPEEHADFSSFLLLVDAAVQRAAELELEKKQEPNP.

2 disordered regions span residues 1-58 and 126-210; these read MEAA…GNLP and TGKD…SPEE. Positions 21 to 39 are enriched in polar residues; that stretch reads AKTQSPAQDTSIMSRNNAD. Positions 48 to 111 form a DNA-binding region, homeobox; TALE-type; the sequence is EHKKKRKGNL…INARRRILPD (64 aa). A compositionally biased stretch (low complexity) spans 195-206; sequence VSVTSPSSPELV.

This sequence belongs to the TALE/TGIF homeobox family. Specifically expressed in adult testis.

Its subcellular location is the nucleus. May have a transcription role in testis. This is Homeobox protein TGIF2LX (TGIF2LX) from Homo sapiens (Human).